Here is a 393-residue protein sequence, read N- to C-terminus: Seven-bladed beta-propeller protein Rv1057 (393 aa).

A disordered region spans residues 208–230 (DGGRIGSRSRSRQKSSKPRGNQA). A compositionally biased stretch (basic residues) spans 214 to 224 (SRSRSRQKSSK).

In terms of biological role, may play an important role in host-pathogen interactions and in ESAT-6 secretion. The sequence is that of Seven-bladed beta-propeller protein Rv1057 from Mycobacterium tuberculosis (strain ATCC 25618 / H37Rv).